We begin with the raw amino-acid sequence, 187 residues long: tRNA (cytidine(56)-2'-O)-methyltransferase (187 aa).

S-adenosyl-L-methionine contacts are provided by residues leucine 94 and 120 to 124; that span reads GAEKV.

It belongs to the aTrm56 family. Homodimer.

It localises to the cytoplasm. It catalyses the reaction cytidine(56) in tRNA + S-adenosyl-L-methionine = 2'-O-methylcytidine(56) in tRNA + S-adenosyl-L-homocysteine + H(+). In terms of biological role, specifically catalyzes the AdoMet-dependent 2'-O-ribose methylation of cytidine at position 56 in tRNAs. This is tRNA (cytidine(56)-2'-O)-methyltransferase from Hyperthermus butylicus (strain DSM 5456 / JCM 9403 / PLM1-5).